A 469-amino-acid chain; its full sequence is Glutamine synthetase (469 aa).

The region spanning 14–99 (NDVKFVDLRF…VCDILDPVSG (86 aa)) is the GS beta-grasp domain. A GS catalytic domain is found at 106 to 469 (RRGTAKKAEA…PVEYDMYYSA (364 aa)). Mg(2+)-binding residues include E131 and E133. E209 contacts ATP. Mg(2+) is bound by residues E214 and D221. Residues 265–266 (NG) and G266 each bind L-glutamate. H270 provides a ligand contact to Mg(2+). Residues 272–274 (HQS) and S274 contribute to the ATP site. Positions 322, 328, and 340 each coordinate L-glutamate. 3 residues coordinate ATP: R340, R345, and K353. E358 provides a ligand contact to Mg(2+). L-glutamate is bound at residue R360. Y398 carries the post-translational modification O-AMP-tyrosine.

It belongs to the glutamine synthetase family. Oligomer of 12 subunits arranged in the form of two hexameric ring. Requires Mg(2+) as cofactor.

The protein localises to the cytoplasm. The enzyme catalyses L-glutamate + NH4(+) + ATP = L-glutamine + ADP + phosphate + H(+). With respect to regulation, the activity of this enzyme could be controlled by adenylation under conditions of abundant glutamine. Its function is as follows. Catalyzes the ATP-dependent biosynthesis of glutamine from glutamate and ammonia. In Rhizobium leguminosarum bv. viciae, this protein is Glutamine synthetase.